The following is an 820-amino-acid chain: LPS-assembly protein LptD (820 aa).

The interval 1–27 is disordered; sequence MDLSSLPDPLRPTHSRLPARRRDRAEP. Basic residues predominate over residues 13 to 22; sequence THSRLPARRR.

This sequence belongs to the LptD family. In terms of assembly, component of the lipopolysaccharide transport and assembly complex. Interacts with LptE and LptA.

Its function is as follows. Together with LptE, is involved in the assembly of lipopolysaccharide (LPS) at the surface of the outer membrane. The sequence is that of LPS-assembly protein LptD from Paracidovorax citrulli (strain AAC00-1) (Acidovorax citrulli).